The chain runs to 212 residues: Peptide methionine sulfoxide reductase MsrA (212 aa).

C52 is a catalytic residue.

It belongs to the MsrA Met sulfoxide reductase family.

The catalysed reaction is L-methionyl-[protein] + [thioredoxin]-disulfide + H2O = L-methionyl-(S)-S-oxide-[protein] + [thioredoxin]-dithiol. It catalyses the reaction [thioredoxin]-disulfide + L-methionine + H2O = L-methionine (S)-S-oxide + [thioredoxin]-dithiol. Its function is as follows. Has an important function as a repair enzyme for proteins that have been inactivated by oxidation. Catalyzes the reversible oxidation-reduction of methionine sulfoxide in proteins to methionine. The polypeptide is Peptide methionine sulfoxide reductase MsrA (Yersinia enterocolitica serotype O:8 / biotype 1B (strain NCTC 13174 / 8081)).